An 84-amino-acid chain; its full sequence is ATP synthase subunit c (84 aa).

Helical transmembrane passes span 9–29 (IIGA…GFAI) and 54–74 (IVAG…LLFI).

Belongs to the ATPase C chain family. In terms of assembly, F-type ATPases have 2 components, F(1) - the catalytic core - and F(0) - the membrane proton channel. F(1) has five subunits: alpha(3), beta(3), gamma(1), delta(1), epsilon(1). F(0) has three main subunits: a(1), b(2) and c(10-14). The alpha and beta chains form an alternating ring which encloses part of the gamma chain. F(1) is attached to F(0) by a central stalk formed by the gamma and epsilon chains, while a peripheral stalk is formed by the delta and b chains.

It localises to the cell inner membrane. Functionally, f(1)F(0) ATP synthase produces ATP from ADP in the presence of a proton or sodium gradient. F-type ATPases consist of two structural domains, F(1) containing the extramembraneous catalytic core and F(0) containing the membrane proton channel, linked together by a central stalk and a peripheral stalk. During catalysis, ATP synthesis in the catalytic domain of F(1) is coupled via a rotary mechanism of the central stalk subunits to proton translocation. Key component of the F(0) channel; it plays a direct role in translocation across the membrane. A homomeric c-ring of between 10-14 subunits forms the central stalk rotor element with the F(1) delta and epsilon subunits. The chain is ATP synthase subunit c from Haemophilus influenzae (strain PittEE).